The primary structure comprises 204 residues: N-(5'-phosphoribosyl)anthranilate isomerase (204 aa).

The protein belongs to the TrpF family.

It catalyses the reaction N-(5-phospho-beta-D-ribosyl)anthranilate = 1-(2-carboxyphenylamino)-1-deoxy-D-ribulose 5-phosphate. The protein operates within amino-acid biosynthesis; L-tryptophan biosynthesis; L-tryptophan from chorismate: step 3/5. In Pseudomonas fluorescens (strain Pf0-1), this protein is N-(5'-phosphoribosyl)anthranilate isomerase.